Here is a 62-residue protein sequence, read N- to C-terminus: Large ribosomal subunit protein bL35 (62 aa).

The span at 1–26 (MPKMKTKSGLKKRIKITATGKVKRGN) shows a compositional bias: basic residues. A disordered region spans residues 1–62 (MPKMKTKSGL…SDFKRYKELI (62 aa)). The segment covering 53 to 62 (SDFKRYKELI) has biased composition (basic and acidic residues).

This sequence belongs to the bacterial ribosomal protein bL35 family.

In Metamycoplasma arthritidis (strain 158L3-1) (Mycoplasma arthritidis), this protein is Large ribosomal subunit protein bL35.